Here is a 593-residue protein sequence, read N- to C-terminus: ESX-1 secretion system protein EccCb1 (593 aa).

2 FtsK domains span residues 66 to 260 and 350 to 546; these read RQEV…NETQ and QVPL…EKND. ATP contacts are provided by residues 85–92 and 377–384; these read GAPQTGKS and GAPKSGKT.

As to quaternary structure, part of the ESX-1 / type VII secretion system (T7SS), which is composed of cytosolic and membrane components. The ESX-1 membrane complex is composed of EccB1, EccCa1, EccCb1, EccD1 and EccE1.

The protein localises to the cytoplasm. Its function is as follows. Part of the ESX-1 / type VII specialized secretion system (T7SS), which exports several proteins including EsxA and EsxB. Plays a role in DNA conjugation, in both donor and recipient strains. The protein is ESX-1 secretion system protein EccCb1 (eccCb1) of Mycolicibacterium smegmatis (strain MKD8) (Mycobacterium smegmatis).